A 125-amino-acid polypeptide reads, in one-letter code: MPTINQLVRKPRQKVVAKSKVPALESCPQKRGVCTRVYTTTPKKPNSALRKVAKVRLTNGYEVISYIGGEGHNLQEHSVVLLRGGRVKDLPGVRYHMVRGSLDTAGVKDRKQARSKYGAKRPKAA.

Aspartate 89 carries the 3-methylthioaspartic acid modification. A disordered region spans residues 105–125 (AGVKDRKQARSKYGAKRPKAA). Residues 113–125 (ARSKYGAKRPKAA) are compositionally biased toward basic residues.

This sequence belongs to the universal ribosomal protein uS12 family. In terms of assembly, part of the 30S ribosomal subunit. Contacts proteins S8 and S17. May interact with IF1 in the 30S initiation complex.

With S4 and S5 plays an important role in translational accuracy. Functionally, interacts with and stabilizes bases of the 16S rRNA that are involved in tRNA selection in the A site and with the mRNA backbone. Located at the interface of the 30S and 50S subunits, it traverses the body of the 30S subunit contacting proteins on the other side and probably holding the rRNA structure together. The combined cluster of proteins S8, S12 and S17 appears to hold together the shoulder and platform of the 30S subunit. This Methylobacillus flagellatus (strain ATCC 51484 / DSM 6875 / VKM B-1610 / KT) protein is Small ribosomal subunit protein uS12.